Consider the following 185-residue polypeptide: MKIFGKWDPTEVEVRDLGIKRYVSLTPVIVPHSSGKHARQQFNKSEISIVERLANNLMRTEINTGKKQKTLRAVEEAFDIVSKKTKQNPIQVLVDAIANAGPREEVVRLKYGGISVPKAVDTAPQRRVDTALRYISMGTNNAAFKSKRSVAECLATELIGAANRDTKSFAINRKDAKERVAKAAR.

Belongs to the universal ribosomal protein uS7 family. Part of the 30S ribosomal subunit.

One of the primary rRNA binding proteins, it binds directly to 16S rRNA where it nucleates assembly of the head domain of the 30S subunit. Is located at the subunit interface close to the decoding center. The chain is Small ribosomal subunit protein uS7 from Methanosarcina barkeri (strain Fusaro / DSM 804).